Consider the following 360-residue polypeptide: Protein phosphatase 1L (360 aa).

The Extracellular portion of the chain corresponds to 1–25; sequence MIEDTMTLLSLLGRIMRYFLLRPET. Residues 26–42 traverse the membrane as a helical segment; sequence LFLLCISLALWSYFFHT. Residues 43 to 360 are Cytoplasmic-facing; the sequence is DEVKTIVKSS…FRNSSKTEEQ (318 aa). The PPM-type phosphatase domain occupies 92–351; that stretch reads NVAVYSIQGR…DNITVMVVKF (260 aa). 4 residues coordinate Mn(2+): aspartate 128, glycine 129, aspartate 302, and aspartate 342.

This sequence belongs to the PP2C family. As to quaternary structure, interacts with MAP3K7/TAK1. Interacts with MAP3K5. Mg(2+) serves as cofactor. It depends on Mn(2+) as a cofactor. Ubiquitous. Highly expressed in heart, placenta, lung, liver, kidney and pancreas.

It is found in the membrane. The enzyme catalyses O-phospho-L-seryl-[protein] + H2O = L-seryl-[protein] + phosphate. It carries out the reaction O-phospho-L-threonyl-[protein] + H2O = L-threonyl-[protein] + phosphate. Functionally, acts as a suppressor of the SAPK signaling pathways by associating with and dephosphorylating MAP3K7/TAK1 and MAP3K5, and by attenuating the association between MAP3K7/TAK1 and MAP2K4 or MAP2K6. The chain is Protein phosphatase 1L (PPM1L) from Homo sapiens (Human).